Consider the following 414-residue polypeptide: Carboxyl-terminal-processing protease (414 aa).

A signal peptide spans 1–29; it reads MLRKRLQAGLCSLLLVLVLVFGPMERAIA. The PDZ domain occupies 100–184; the sequence is YRSLKVSTSG…STVSLTVKSP (85 aa). Active-site charge relay system residues include Ser310, Asp321, and Lys335.

The protein belongs to the peptidase S41A family.

It localises to the cellular thylakoid lumen. The enzyme catalyses The enzyme shows specific recognition of a C-terminal tripeptide, Xaa-Yaa-Zaa, in which Xaa is preferably Ala or Leu, Yaa is preferably Ala or Tyr, and Zaa is preferably Ala, but then cleaves at a variable distance from the C-terminus. A typical cleavage is -Ala-Ala-|-Arg-Ala-Ala-Lys-Glu-Asn-Tyr-Ala-Leu-Ala-Ala.. In terms of biological role, cleavage of the 16 C-terminal residues from the D1 precursor of photosystem II (PSII). This proteolytic processing is necessary to allow the light-driven assembly of the oxygen-evolving cluster (a tetranuclear manganese), which is responsible for photosynthetic water oxidation. The sequence is that of Carboxyl-terminal-processing protease (ctpA) from Picosynechococcus sp. (strain ATCC 27264 / PCC 7002 / PR-6) (Agmenellum quadruplicatum).